The following is a 335-amino-acid chain: Erlin-2-A (335 aa).

The Cytoplasmic segment spans residues 1-2 (MS). Residues 3–23 (HAGAIVGLGVALIAAALFSAI) traverse the membrane as a helical segment. Residues 24-335 (HKIEEGHVGV…GLDEAASAEE (312 aa)) are Lumenal-facing. An N-linked (GlcNAc...) asparagine glycan is attached at Asn-106.

Belongs to the band 7/mec-2 family.

The protein localises to the endoplasmic reticulum membrane. In terms of biological role, mediates the endoplasmic reticulum-associated degradation (ERAD) of inositol 1,4,5-trisphosphate receptors (IP3Rs). Promotes sterol-accelerated ERAD of HMGCR. Involved in regulation of cellular cholesterol homeostasis by regulation the SREBP signaling pathway. The sequence is that of Erlin-2-A (erlin2-a) from Xenopus laevis (African clawed frog).